The chain runs to 138 residues: Eukaryotic translation initiation factor 1A (138 aa).

Basic residues predominate over residues 1–15 (MPKNKGKGGKNRRRG). A disordered region spans residues 1–28 (MPKNKGKGGKNRRRGKNENENEKRELTY). Residues 16–27 (KNENENEKRELT) show a composition bias toward basic and acidic residues. Residues 22 to 96 (EKRELTYAEE…EKGDVILKYT (75 aa)) form the S1-like domain.

It belongs to the eIF-1A family.

Seems to be required for maximal rate of protein biosynthesis. Enhances ribosome dissociation into subunits and stabilizes the binding of the initiator Met-tRNA(I) to 40 S ribosomal subunits. This is Eukaryotic translation initiation factor 1A (tif11) from Schizosaccharomyces pombe (strain 972 / ATCC 24843) (Fission yeast).